A 222-amino-acid chain; its full sequence is Histidinol-phosphatase (222 aa).

Residue Asp8 is the Nucleophile of the active site. Asp8, Asp10, and Asp184 together coordinate Mg(2+). Residue Asp10 is the Proton donor of the active site.

This sequence belongs to the HAD-like hydrolase superfamily. SerB family. Mg(2+) is required as a cofactor.

It carries out the reaction L-histidinol phosphate + H2O = L-histidinol + phosphate. It functions in the pathway amino-acid biosynthesis; L-histidine biosynthesis; L-histidine from 5-phospho-alpha-D-ribose 1-diphosphate: step 8/9. Catalyzes the dephosphorylation of histidinol-phosphate to histidinol, the direct precursor of histidine. This chain is Histidinol-phosphatase, found in Neisseria meningitidis serogroup C (strain 8013).